The chain runs to 336 residues: MAKKYALFIALILVVSYFSLTSGSFSVRPAELLSTLFQIDPNPQYEILLFDLRLPRVVMAAIIGLGLGIAGAVIQAITRNGLADPGILGINAGAGAGIVAFMLLFQGQKEVTSIAAAMGMPLFGLIGGLIAAILIYIFAWHRGNLDSGRIILVGIAINSGFSALSLFLSLKMDPQDYQMAMVWKNGSIWSANWTYITAVLPWMLLFIPILIGKSRLLDTIRFDEDTVRSLGISSNKEKTILLVACVAIISACVSVAGSMAFVGLIAPHISRRLAGVEHRYILPLSGLIGMLLVISADFAGKLFFQPAEVPAGIILAILGVPYFLYLLFKQKKGENA.

The next 9 helical transmembrane spans lie at 7-27 (LFIALILVVSYFSLTSGSFSV), 57-77 (VVMAAIIGLGLGIAGAVIQAI), 85-105 (PGILGINAGAGAGIVAFMLLF), 120-140 (MPLFGLIGGLIAAILIYIFAW), 150-170 (IILVGIAINSGFSALSLFLSL), 191-211 (ANWTYITAVLPWMLLFIPILI), 246-266 (VAIISACVSVAGSMAFVGLIA), 280-300 (YILPLSGLIGMLLVISADFAG), and 308-328 (EVPAGIILAILGVPYFLYLLF).

The protein belongs to the binding-protein-dependent transport system permease family. FecCD subfamily. The complex is composed of one ATP-binding protein (YusV), two transmembrane proteins (FeuB and FeuC) and a solute-binding protein (FeuA).

Its subcellular location is the cell membrane. In terms of biological role, involved in the uptake of iron. Probably responsible for the translocation of the substrate across the membrane. Its function is as follows. Part of the ABC transporter complex FeuABC/YusV involved in import of the catecholate siderophores bacillibactin and enterobactin. In Bacillus subtilis (strain 168), this protein is Iron-uptake system permease protein FeuC (feuC).